A 71-amino-acid polypeptide reads, in one-letter code: Translation initiation factor IF-1 (71 aa).

In terms of domain architecture, S1-like spans 1 to 71; that stretch reads MSKDDLIQFT…LTKGRVIHRH (71 aa).

This sequence belongs to the IF-1 family. In terms of assembly, component of the 30S ribosomal translation pre-initiation complex which assembles on the 30S ribosome in the order IF-2 and IF-3, IF-1 and N-formylmethionyl-tRNA(fMet); mRNA recruitment can occur at any time during PIC assembly.

Its subcellular location is the cytoplasm. Its function is as follows. One of the essential components for the initiation of protein synthesis. Stabilizes the binding of IF-2 and IF-3 on the 30S subunit to which N-formylmethionyl-tRNA(fMet) subsequently binds. Helps modulate mRNA selection, yielding the 30S pre-initiation complex (PIC). Upon addition of the 50S ribosomal subunit IF-1, IF-2 and IF-3 are released leaving the mature 70S translation initiation complex. This chain is Translation initiation factor IF-1, found in Rickettsia typhi (strain ATCC VR-144 / Wilmington).